A 210-amino-acid chain; its full sequence is Fimbriae Z protein (210 aa).

In terms of domain architecture, Response regulatory spans S5 to L121. A 4-aspartylphosphate modification is found at D56. The region spanning N143–E208 is the HTH luxR-type domain. The H-T-H motif DNA-binding region spans N167 to S186.

It localises to the cytoplasm. This is Fimbriae Z protein (fimZ) from Escherichia coli O157:H7.